The sequence spans 248 residues: MLLCSLTLTLILLAVSGTKCDVKEFCAACSGVPGIPGSPGLPGRDGRDGVKGDPGPPGPIGPPGGMPGSPGHDGLIGPPGPPGERGDKGEPGERGPPGPPAYPDEELQTTLHDIRHQILQLMGALSLQGSMLAVGEKVFSTNGQVVDFDAIRESCARAGGRIAVPKSLEENAAIASLVTKHNTYAYLGLEEGPTAGDFYYLDGAPVNYTNWYPGEPRGRGKEKCVEMYTDGQWNDRSCLQYRLAICEF.

The N-terminal stretch at 1–20 (MLLCSLTLTLILLAVSGTKC) is a signal peptide. The Collagen-like domain occupies 31-100 (GVPGIPGSPG…PGERGPPGPP (70 aa)). Residues 34–105 (GIPGSPGLPG…PPGPPAYPDE (72 aa)) form a disordered region. The segment covering 54–65 (PGPPGPIGPPGG) has biased composition (pro residues). A compositionally biased stretch (basic and acidic residues) spans 84–93 (ERGDKGEPGE). Positions 134–247 (VGEKVFSTNG…CLQYRLAICE (114 aa)) constitute a C-type lectin domain. 2 disulfide bridges follow: cysteine 155–cysteine 246 and cysteine 224–cysteine 238. Asparagine 207 carries an N-linked (GlcNAc...) asparagine glycan. Positions 215, 217, 234, and 235 each coordinate Ca(2+).

It belongs to the SFTPA family. In terms of assembly, oligomeric complex of 6 set of homotrimers.

The protein resides in the secreted. It is found in the extracellular space. It localises to the extracellular matrix. The protein localises to the surface film. In presence of calcium ions, it binds to surfactant phospholipids and contributes to lower the surface tension at the air-liquid interface in the alveoli of the mammalian lung and is essential for normal respiration. Enhances the expression of MYO18A/SP-R210 on alveolar macrophages. This Equus caballus (Horse) protein is Pulmonary surfactant-associated protein A (SFTPA1).